The primary structure comprises 386 residues: Histidinol-phosphate aminotransferase (386 aa).

The residue at position 240 (lysine 240) is an N6-(pyridoxal phosphate)lysine.

The protein belongs to the class-II pyridoxal-phosphate-dependent aminotransferase family. Histidinol-phosphate aminotransferase subfamily. Homodimer. It depends on pyridoxal 5'-phosphate as a cofactor.

It catalyses the reaction L-histidinol phosphate + 2-oxoglutarate = 3-(imidazol-4-yl)-2-oxopropyl phosphate + L-glutamate. It participates in amino-acid biosynthesis; L-histidine biosynthesis; L-histidine from 5-phospho-alpha-D-ribose 1-diphosphate: step 7/9. In Bifidobacterium longum (strain NCC 2705), this protein is Histidinol-phosphate aminotransferase.